The sequence spans 301 residues: Dimethylsulfoniopropionate lyase (301 aa).

Residues cysteine 111 and cysteine 230 each act as proton donor/acceptor in the active site.

The protein belongs to the aspartate/glutamate racemases family. ALMA1 subfamily. In terms of assembly, homotetramer.

It carries out the reaction S,S-dimethyl-beta-propiothetin = acrylate + dimethyl sulfide + H(+). Functionally, mediates cleavage of dimethylsulfoniopropionate (DMSP) into dimethyl sulfide (DMS) and acrylate. DMS is the principal form by which sulfur is transported from oceans to the atmosphere and is a key component of the ocean sulfur cycle. In Durusdinium sp. clade D (Symbiodinium sp. clade D), this protein is Dimethylsulfoniopropionate lyase.